An 872-amino-acid chain; its full sequence is C-mannosyltransferase dpy-19 homolog (872 aa).

Transmembrane regions (helical) follow at residues 4–24, 126–146, 149–169, 179–199, 211–231, 257–277, 279–299, 326–346, and 399–419; these read PNLYVILSHALIGCGFFFLYV, FVWLMGGVTLLVLYLYGTLLS, IFGGIYGVISYLMFHSFVAKI, FAFPFIFLQMFYLCICIGRII, IFAMSLFTACALLSWQFSTFI, VLDYSLSHLLGHALAFVMSHG, SQLLLTWQLSISLFLFLITMV, FLMLTLLLASSVQTTLIELFN, and VKTMIVKPYCMYGVVMLAMFF. Positions 508 to 535 form a coiled coil; sequence KRLRAQINRNSVKQRKERAQETKEAATD. The tract at residues 514 to 620 is disordered; sequence INRNSVKQRK…RSSSRRSSVV (107 aa). Positions 524–533 are enriched in basic and acidic residues; sequence ERAQETKEAA. A compositionally biased stretch (acidic residues) spans 541-551; sequence TEEEDKDPEAE. The next 2 helical transmembrane spans lie at 627-647 and 678-698; these read ILNMHYVYSFLQMLVFTLIGL and NIFWSVSLAVFLLSMFDPGMV.

Belongs to the dpy-19 family.

Its subcellular location is the membrane. Its function is as follows. Probable C-mannosyltransferase that mediates C-mannosylation of tryptophan residues on target proteins. The protein is C-mannosyltransferase dpy-19 homolog of Drosophila melanogaster (Fruit fly).